The primary structure comprises 62 residues: Conotoxin TxIC (62 aa).

A signal peptide spans 1-22 (MHCLPIFVILLLLTASGPSVDA). A propeptide spanning residues 23–47 (QLKTKDDVPLSSFRDHAKSTLRRLQ) is cleaved from the precursor. 2 disulfide bridges follow: Cys52–Cys58 and Cys53–Cys61. Pro60 carries the post-translational modification 4-hydroxyproline. Cys61 bears the Cysteine amide mark.

It belongs to the conotoxin A superfamily. As to expression, expressed by the venom duct.

Its subcellular location is the secreted. The sequence is that of Conotoxin TxIC from Conus textile (Cloth-of-gold cone).